Reading from the N-terminus, the 127-residue chain is MSNRKPYVREVKRTWWKNHPFYRFYMLREATVLPLILFTLFLTFGLGCLVKGPEAWQGWLAFMANPIVVAINIVALLGSLFHAQTFFSMMPQVMPIRLKGKPVDKKIIVLTQWAAVAFISLIVLIVV.

The next 3 helical transmembrane spans lie at 30–50, 58–78, and 107–127; these read ATVL…GCLV, GWLA…ALLG, and IIVL…LIVV.

It belongs to the FrdC family. In terms of assembly, part of an enzyme complex containing four subunits: a flavoprotein (FrdA), an iron-sulfur protein (FrdB), and two hydrophobic anchor proteins (FrdC and FrdD).

The protein resides in the cell inner membrane. Functionally, anchors the catalytic components of the fumarate reductase complex to the cell membrane, binds quinones. This Vibrio parahaemolyticus serotype O3:K6 (strain RIMD 2210633) protein is Fumarate reductase subunit C.